The following is a 92-amino-acid chain: Small ribosomal subunit protein bS20 (92 aa).

This sequence belongs to the bacterial ribosomal protein bS20 family.

Binds directly to 16S ribosomal RNA. This chain is Small ribosomal subunit protein bS20, found in Persephonella marina (strain DSM 14350 / EX-H1).